We begin with the raw amino-acid sequence, 989 residues long: Cellulose synthase A catalytic subunit 4 [UDP-forming] (989 aa).

Residues 1–184 (MMESGVPPCA…SRIIPISKNK (184 aa)) are Cytoplasmic-facing. Residues Cys-9, Cys-12, Cys-20, Cys-23, Cys-28, Cys-31, Cys-43, and Cys-46 each contribute to the Zn(2+) site. The RING-type; degenerate zinc finger occupies 9 to 47 (CAACGDDAHAACRACSYALCKACLDEDAAEGRTTCARCG). Residues 138–149 (KKEKKASAKKAA) show a composition bias toward basic residues. The segment at 138–158 (KKEKKASAKKAAAKAQAPPVE) is disordered. A helical membrane pass occupies residues 185–205 (LTPYRAVIIMRLVVLGLFFHY). At 206–213 (RITNPVYS) the chain is on the extracellular side. The chain crosses the membrane as a helical span at residues 214–234 (AFGLWMTSVICEIWFGFSWIL). The Cytoplasmic segment spans residues 235–772 (DQFPKWCPIN…INTIVYPFTS (538 aa)). The UDP-alpha-D-glucose site is built by Ser-272, Lys-278, Glu-279, and Asp-308. The active site involves Asp-308. Positions 362 to 389 (VKERRAMKRDYEEYKVRINALVAKAQKT) form a coiled coil. Lys-449 contacts UDP-alpha-D-glucose. Residues Lys-450 and Asp-474 each coordinate Mn(2+). The active site involves Asp-688. The chain crosses the membrane as a helical span at residues 773–793 (LPLIAYCCLPAICLLTGKFII). At 794-798 (PTLSN) the chain is on the extracellular side. Residues 799-819 (AATIWFLGLFISIIVTSVLEL) traverse the membrane as a helical segment. Residues 820 to 835 (RWSGIGIEDWWRNEQF) lie on the Cytoplasmic side of the membrane. A helical transmembrane segment spans residues 836–856 (WVIGGVSAHLFAVFQGILKMI). The Extracellular segment spans residues 857-884 (AGLDTNFTVTAKATDDTEFGELYVFKWT). Asn-862 carries an N-linked (GlcNAc...) asparagine glycan. Residues 885–905 (TVLIPPTSILVLNLVGVVAGF) traverse the membrane as a helical segment. Topologically, residues 906–916 (SDALNSGYESW) are cytoplasmic. A helical membrane pass occupies residues 917–937 (GPLFGKVFFAMWVIMHLYPFL). Residues 938-946 (KGLMGRQNR) lie on the Extracellular side of the membrane. Residues 947-967 (TPTIVVLWSVLLASVFSLLWV) form a helical membrane-spanning segment. Topologically, residues 968–989 (KIDPFIGSSETTTTNSCANFDC) are cytoplasmic.

It belongs to the glycosyltransferase 2 family. Plant cellulose synthase subfamily. Requires Mn(2+) as cofactor. It depends on Zn(2+) as a cofactor.

It localises to the cell membrane. It catalyses the reaction [(1-&gt;4)-beta-D-glucosyl](n) + UDP-alpha-D-glucose = [(1-&gt;4)-beta-D-glucosyl](n+1) + UDP + H(+). It participates in glycan metabolism; plant cellulose biosynthesis. In terms of biological role, catalytic subunit of cellulose synthase terminal complexes ('rosettes'), required for beta-1,4-glucan microfibril crystallization, a major mechanism of the cell wall formation. Involved in the secondary cell wall formation. This chain is Cellulose synthase A catalytic subunit 4 [UDP-forming] (CESA4), found in Oryza sativa subsp. indica (Rice).